A 432-amino-acid chain; its full sequence is Adenylosuccinate synthetase (432 aa).

GTP-binding positions include 13-19 (GDEGKGK) and 41-43 (GHT). Catalysis depends on aspartate 14, which acts as the Proton acceptor. 2 residues coordinate Mg(2+): aspartate 14 and glycine 41. Residues 14-17 (DEGK), 39-42 (NAGH), threonine 130, arginine 144, glutamine 225, threonine 240, and arginine 304 contribute to the IMP site. The active-site Proton donor is histidine 42. 300-306 (ATTGRKR) contacts substrate. GTP is bound by residues arginine 306, 332 to 334 (KLD), and 414 to 416 (STG).

The protein belongs to the adenylosuccinate synthetase family. Homodimer. It depends on Mg(2+) as a cofactor.

Its subcellular location is the cytoplasm. It carries out the reaction IMP + L-aspartate + GTP = N(6)-(1,2-dicarboxyethyl)-AMP + GDP + phosphate + 2 H(+). Its pathway is purine metabolism; AMP biosynthesis via de novo pathway; AMP from IMP: step 1/2. In terms of biological role, plays an important role in the de novo pathway of purine nucleotide biosynthesis. Catalyzes the first committed step in the biosynthesis of AMP from IMP. In Alkalilimnicola ehrlichii (strain ATCC BAA-1101 / DSM 17681 / MLHE-1), this protein is Adenylosuccinate synthetase.